A 322-amino-acid chain; its full sequence is AB hydrolase superfamily protein FGSG_00044 (322 aa).

An AB hydrolase-1 domain is found at 36–319 (RTTPKQPVAI…ITAEVRRIVK (284 aa)).

Belongs to the AB hydrolase superfamily.

Its pathway is mycotoxin biosynthesis. Functionally, AB hydrolase superfamily protein; part of the gene cluster that mediates the biosynthesis of gramillins A and B, bicyclic lipopeptides that induce cell death in maize leaves but not in wheat leaves. The nonribosomal peptide synthetase GRA1 incorporates respectively a glutamic adic (Glu), a leucine (Leu), a serine (Ser), a hydroxyglutamine (HOGln), a 2-amino decanoic acid, and 2 cysteins (CysB and CysA). The biosynthesis of 2-amino decanoic acid incorporated in gramillins could be initiated by a fatty acid synthase composed of the alpha and beta subunits FGSG_00036 and FGSG_11656. The cytochrome P450 monooxygenase FGSG_15680 could hydroxylate the fatty acid chain. Subsequent oxidation to the ketone by the oxidoreductase FGSG_00048 and transamination by aminotransferase FGSG_00049 could form 2-amino-decanoic acid. On the other hand, FGSG_15680 could also be responsible for the HO-modified glutamine at the gamma-position. Whether hydroxylation occurs on the fully assembled product or on the Gln residue prior to assembly into the gramillins requires further proof. The thioredoxin FGSG_00043 could also be required for the disulfide-bond formation between CysA and CysB. The specific involvement of the remaining proteins from the cluster is more difficult to discern, but could have broader regulatory (FGSG_00040 and FGSG_11657) or enzymatic functions (FGSG_00044 and FGSG_00045). The final C-domain of GRA1 does not possess the expected sequence of a termination CT domain, often implicated in macrocyclization and release of a cyclopeptidein fungal NRPs; and the thioesterase FGSG_00047 may act in concert with the terminal C-domain of GRA1 to catalyze the formation of the macrocyclic anhydride and release of the products. This is AB hydrolase superfamily protein FGSG_00044 from Gibberella zeae (strain ATCC MYA-4620 / CBS 123657 / FGSC 9075 / NRRL 31084 / PH-1) (Wheat head blight fungus).